A 243-amino-acid polypeptide reads, in one-letter code: Ribosomal RNA small subunit methyltransferase J (243 aa).

S-adenosyl-L-methionine contacts are provided by residues 112–113 and Asp-164; that span reads ER.

It belongs to the methyltransferase superfamily. RsmJ family.

The protein resides in the cytoplasm. It carries out the reaction guanosine(1516) in 16S rRNA + S-adenosyl-L-methionine = N(2)-methylguanosine(1516) in 16S rRNA + S-adenosyl-L-homocysteine + H(+). Specifically methylates the guanosine in position 1516 of 16S rRNA. The sequence is that of Ribosomal RNA small subunit methyltransferase J from Legionella pneumophila (strain Corby).